A 788-amino-acid chain; its full sequence is Endonuclease MutS2 (788 aa).

ATP is bound at residue 332 to 339 (GPNTGGKT). The Smr domain occupies 713–788 (VDLRGMDAEE…GTGVTVVELK (76 aa)).

Belongs to the DNA mismatch repair MutS family. MutS2 subfamily. As to quaternary structure, homodimer. Binds to stalled ribosomes, contacting rRNA.

Functionally, endonuclease that is involved in the suppression of homologous recombination and thus may have a key role in the control of bacterial genetic diversity. Acts as a ribosome collision sensor, splitting the ribosome into its 2 subunits. Detects stalled/collided 70S ribosomes which it binds and splits by an ATP-hydrolysis driven conformational change. Acts upstream of the ribosome quality control system (RQC), a ribosome-associated complex that mediates the extraction of incompletely synthesized nascent chains from stalled ribosomes and their subsequent degradation. Probably generates substrates for RQC. This is Endonuclease MutS2 from Clostridium botulinum (strain ATCC 19397 / Type A).